A 361-amino-acid polypeptide reads, in one-letter code: Chorismate synthase (361 aa).

Residues arginine 48 and arginine 54 each contribute to the NADP(+) site. FMN is bound by residues 125–127 (RSS), 238–239 (NA), glycine 278, 293–297 (KPTSS), and arginine 319.

It belongs to the chorismate synthase family. In terms of assembly, homotetramer. The cofactor is FMNH2.

The enzyme catalyses 5-O-(1-carboxyvinyl)-3-phosphoshikimate = chorismate + phosphate. The protein operates within metabolic intermediate biosynthesis; chorismate biosynthesis; chorismate from D-erythrose 4-phosphate and phosphoenolpyruvate: step 7/7. Its function is as follows. Catalyzes the anti-1,4-elimination of the C-3 phosphate and the C-6 proR hydrogen from 5-enolpyruvylshikimate-3-phosphate (EPSP) to yield chorismate, which is the branch point compound that serves as the starting substrate for the three terminal pathways of aromatic amino acid biosynthesis. This reaction introduces a second double bond into the aromatic ring system. In Escherichia coli (strain K12 / MC4100 / BW2952), this protein is Chorismate synthase.